Reading from the N-terminus, the 230-residue chain is Sugar fermentation stimulation protein homolog (230 aa).

This sequence belongs to the SfsA family.

This Clostridium botulinum (strain Okra / Type B1) protein is Sugar fermentation stimulation protein homolog.